The chain runs to 242 residues: DNA repair protein RecO (242 aa).

It belongs to the RecO family.

Its function is as follows. Involved in DNA repair and RecF pathway recombination. The polypeptide is DNA repair protein RecO (Dechloromonas aromatica (strain RCB)).